The primary structure comprises 267 residues: Hydroxyethylthiazole kinase 2 (267 aa).

Met41 serves as a coordination point for substrate. Positions 116 and 166 each coordinate ATP. Gly193 contributes to the substrate binding site.

Belongs to the Thz kinase family. Mg(2+) serves as cofactor.

The enzyme catalyses 5-(2-hydroxyethyl)-4-methylthiazole + ATP = 4-methyl-5-(2-phosphooxyethyl)-thiazole + ADP + H(+). It functions in the pathway cofactor biosynthesis; thiamine diphosphate biosynthesis; 4-methyl-5-(2-phosphoethyl)-thiazole from 5-(2-hydroxyethyl)-4-methylthiazole: step 1/1. In terms of biological role, catalyzes the phosphorylation of the hydroxyl group of 4-methyl-5-beta-hydroxyethylthiazole (THZ). This is Hydroxyethylthiazole kinase 2 from Streptococcus pneumoniae (strain Taiwan19F-14).